Consider the following 271-residue polypeptide: Plasmanylethanolamine desaturase 1 (271 aa).

The segment at 1–25 (MAGAEDAPGRQPELDEDETAEGRRW) is disordered. 3 helical membrane-spanning segments follow: residues 48–68 (WCSV…LLLL), 75–95 (PLVI…SGLV), and 166–186 (LYPW…TNQI). Residues 187 to 191 (HKWSH) carry the Histidine box-1 motif. Positions 214-218 (HHRIH) match the Histidine box-2 motif.

It belongs to the fatty acid desaturase CarF family.

It is found in the endoplasmic reticulum membrane. The catalysed reaction is a 1-(1,2-saturated alkyl)-2-acyl-sn-glycero-3-phosphoethanolamine + 2 Fe(II)-[cytochrome b5] + O2 + 2 H(+) = a 1-O-(1Z-alkenyl)-2-acyl-sn-glycero-3-phosphoethanolamine + 2 Fe(III)-[cytochrome b5] + 2 H2O. It carries out the reaction a 1-O-hexadecyl-2-acyl-sn-glycero-3-phosphoethanolamine + 2 Fe(II)-[cytochrome b5] + O2 + 2 H(+) = a 1-O-(1Z-hexadecenyl)-2-acyl-sn-glycero-3-phosphoethanolamine + 2 Fe(III)-[cytochrome b5] + 2 H2O. The enzyme catalyses a 1-O-octadecyl-2-acyl-sn-glycero-3-phosphoethanolamine + 2 Fe(II)-[cytochrome b5] + O2 + 2 H(+) = a 1-O-(1Z-octadecenyl)-2-acyl-sn-glycero-3-phosphoethanolamine + 2 Fe(III)-[cytochrome b5] + 2 H2O. It catalyses the reaction a 1-O-(9Z-octadecenyl)-2-acyl-sn-glycero-3-phosphoethanolamine + 2 Fe(II)-[cytochrome b5] + O2 + 2 H(+) = a 1-O-(1Z,9Z-octadecadienyl)-2-acyl-sn-glycero-3-phosphoethanolamine + 2 Fe(III)-[cytochrome b5] + 2 H2O. Its pathway is lipid metabolism; fatty acid metabolism. Functionally, plasmanylethanolamine desaturase involved in plasmalogen biogenesis in the endoplasmic reticulum membrane. Plasmalogens are glycerophospholipids with a hydrocarbon chain linked by a vinyl ether bond at the glycerol sn-1 position, and are involved in antioxidative and signaling mechanisms. This Mus musculus (Mouse) protein is Plasmanylethanolamine desaturase 1.